The primary structure comprises 272 residues: Phosphonates import ATP-binding protein PhnC 1 (272 aa).

The 245-residue stretch at 2–246 folds into the ABC transporter domain; sequence LRIQALTKTY…VLTSIYGEED (245 aa). ATP is bound at residue 35-42; the sequence is GPSGAGKS.

The protein belongs to the ABC transporter superfamily. Phosphonates importer (TC 3.A.1.9.1) family. In terms of assembly, the complex is composed of two ATP-binding proteins (PhnC), two transmembrane proteins (PhnE) and a solute-binding protein (PhnD).

It localises to the cell inner membrane. It carries out the reaction phosphonate(out) + ATP + H2O = phosphonate(in) + ADP + phosphate + H(+). In terms of biological role, part of the ABC transporter complex PhnCDE involved in phosphonates import. Responsible for energy coupling to the transport system. This Rhodopseudomonas palustris (strain BisB18) protein is Phosphonates import ATP-binding protein PhnC 1.